Consider the following 377-residue polypeptide: Ribosomal RNA large subunit methyltransferase G (377 aa).

Belongs to the methyltransferase superfamily. RlmG family.

It is found in the cytoplasm. It carries out the reaction guanosine(1835) in 23S rRNA + S-adenosyl-L-methionine = N(2)-methylguanosine(1835) in 23S rRNA + S-adenosyl-L-homocysteine + H(+). Specifically methylates the guanine in position 1835 (m2G1835) of 23S rRNA. This chain is Ribosomal RNA large subunit methyltransferase G, found in Shewanella sp. (strain ANA-3).